Consider the following 252-residue polypeptide: Triosephosphate isomerase (252 aa).

10–12 contributes to the substrate binding site; it reads NWK. His-96 (electrophile) is an active-site residue. Catalysis depends on Glu-168, which acts as the Proton acceptor. Residues Gly-174, Ser-214, and 235 to 236 contribute to the substrate site; that span reads GG.

The protein belongs to the triosephosphate isomerase family. In terms of assembly, homodimer.

It localises to the cytoplasm. The enzyme catalyses D-glyceraldehyde 3-phosphate = dihydroxyacetone phosphate. Its pathway is carbohydrate biosynthesis; gluconeogenesis. It functions in the pathway carbohydrate degradation; glycolysis; D-glyceraldehyde 3-phosphate from glycerone phosphate: step 1/1. Involved in the gluconeogenesis. Catalyzes stereospecifically the conversion of dihydroxyacetone phosphate (DHAP) to D-glyceraldehyde-3-phosphate (G3P). This is Triosephosphate isomerase from Streptococcus mutans serotype c (strain ATCC 700610 / UA159).